We begin with the raw amino-acid sequence, 290 residues long: Protease HtpX homolog (290 aa).

Transmembrane regions (helical) follow at residues 5–27 (MWLR…GYLF) and 32–51 (VAFI…YWYS). Residue His-133 coordinates Zn(2+). The active site involves Glu-134. His-137 is a Zn(2+) binding site. 2 helical membrane passes run 143 to 163 (ILIG…AYWA) and 182 to 202 (IIGA…IQAA). Glu-208 serves as a coordination point for Zn(2+).

Belongs to the peptidase M48B family. Zn(2+) serves as cofactor.

The protein localises to the cell membrane. This Thermococcus kodakarensis (strain ATCC BAA-918 / JCM 12380 / KOD1) (Pyrococcus kodakaraensis (strain KOD1)) protein is Protease HtpX homolog.